A 137-amino-acid polypeptide reads, in one-letter code: Small ribosomal subunit protein bS6 (137 aa).

Residues 96-137 form a disordered region; that stretch reads ITEASPMAKAKDERDTRRSSEERAPRAEATEEVKESAENTAE. Residues 104–137 show a composition bias toward basic and acidic residues; it reads KAKDERDTRRSSEERAPRAEATEEVKESAENTAE.

This sequence belongs to the bacterial ribosomal protein bS6 family.

In terms of biological role, binds together with bS18 to 16S ribosomal RNA. The chain is Small ribosomal subunit protein bS6 from Shewanella piezotolerans (strain WP3 / JCM 13877).